The sequence spans 336 residues: Probable ADP-ribosylation factor GTPase-activating protein AGD13 (336 aa).

The region spanning 15 to 137 is the Arf-GAP domain; sequence KRRIRDLLNQ…EFLKPSLRIT (123 aa). A C4-type zinc finger spans residues 30–53; it reads CADCGASDPKWASANIGVFICLKC. One can recognise a C2 domain in the interval 162–280; the sequence is RTNSSSQTMF…AMAFGDPEMF (119 aa). Residues D249, S252, and D255 each contribute to the Ca(2+) site.

Ca(2+) serves as cofactor.

Functionally, GTPase-activating protein (GAP) for ADP ribosylation factor (ARF). The polypeptide is Probable ADP-ribosylation factor GTPase-activating protein AGD13 (AGD13) (Arabidopsis thaliana (Mouse-ear cress)).